Here is a 202-residue protein sequence, read N- to C-terminus: Recombination protein RecR (202 aa).

The segment at 61 to 76 (CARCNSFTEDDVCVIC) adopts a C4-type zinc-finger fold. In terms of domain architecture, Toprim spans 84 to 179 (SLLCIVETPA…KVTRLARGVP (96 aa)).

Belongs to the RecR family.

In terms of biological role, may play a role in DNA repair. It seems to be involved in an RecBC-independent recombinational process of DNA repair. It may act with RecF and RecO. The chain is Recombination protein RecR from Bordetella avium (strain 197N).